We begin with the raw amino-acid sequence, 211 residues long: Uracil phosphoribosyltransferase (211 aa).

5-phospho-alpha-D-ribose 1-diphosphate contacts are provided by residues R77, R102, and 129 to 137 (DPMLATGGS). Uracil-binding positions include I192 and 197-199 (GDA). Position 198 (D198) interacts with 5-phospho-alpha-D-ribose 1-diphosphate.

This sequence belongs to the UPRTase family. Mg(2+) is required as a cofactor.

It catalyses the reaction UMP + diphosphate = 5-phospho-alpha-D-ribose 1-diphosphate + uracil. It functions in the pathway pyrimidine metabolism; UMP biosynthesis via salvage pathway; UMP from uracil: step 1/1. Its activity is regulated as follows. Allosterically activated by GTP. Its function is as follows. Catalyzes the conversion of uracil and 5-phospho-alpha-D-ribose 1-diphosphate (PRPP) to UMP and diphosphate. This is Uracil phosphoribosyltransferase from Corynebacterium efficiens (strain DSM 44549 / YS-314 / AJ 12310 / JCM 11189 / NBRC 100395).